A 198-amino-acid chain; its full sequence is Thymidine kinase (198 aa).

Residues 15–22 and 87–90 contribute to the ATP site; these read GCMFSGKT and DEAQ. The active-site Proton acceptor is Glu88. Residues Cys144, Cys147, Cys182, and His185 each contribute to the Zn(2+) site.

The protein belongs to the thymidine kinase family. As to quaternary structure, homotetramer.

The protein resides in the cytoplasm. It carries out the reaction thymidine + ATP = dTMP + ADP + H(+). The protein is Thymidine kinase of Coprothermobacter proteolyticus (strain ATCC 35245 / DSM 5265 / OCM 4 / BT).